A 270-amino-acid polypeptide reads, in one-letter code: Aliphatic sulfonates import ATP-binding protein SsuB 3 (270 aa).

The region spanning leucine 17 to leucine 238 is the ABC transporter domain. ATP is bound at residue glycine 49 to serine 56.

The protein belongs to the ABC transporter superfamily. Aliphatic sulfonates importer (TC 3.A.1.17.2) family. In terms of assembly, the complex is composed of two ATP-binding proteins (SsuB), two transmembrane proteins (SsuC) and a solute-binding protein (SsuA).

It is found in the cell inner membrane. It carries out the reaction ATP + H2O + aliphatic sulfonate-[sulfonate-binding protein]Side 1 = ADP + phosphate + aliphatic sulfonateSide 2 + [sulfonate-binding protein]Side 1.. In terms of biological role, part of the ABC transporter complex SsuABC involved in aliphatic sulfonates import. Responsible for energy coupling to the transport system. The protein is Aliphatic sulfonates import ATP-binding protein SsuB 3 of Pseudomonas syringae pv. syringae (strain B728a).